We begin with the raw amino-acid sequence, 243 residues long: Complement C1q tumor necrosis factor-related protein 5 (243 aa).

An N-terminal signal peptide occupies residues 1–15; sequence MRPLLVLLLLGLAAG. The tract at residues 15-125 is disordered; sequence GSPPLDDNKI…PPPSDAPLPF (111 aa). Positions 30 to 95 constitute a Collagen-like domain; that stretch reads GHPGLPGTPG…AGPAGPTGPA (66 aa). Low complexity predominate over residues 83-96; it reads RGEAGPAGPTGPAG. The 140-residue stretch at 99 to 238 folds into the C1q domain; that stretch reads SVPPRSAFSA…GFLVYSDWHS (140 aa).

As to quaternary structure, may interact with ERFE. Homotrimer (via collagen-like domain). May form higher order oligomers by supercoiling of the trimers.

The protein resides in the secreted. The sequence is that of Complement C1q tumor necrosis factor-related protein 5 (C1QTNF5) from Homo sapiens (Human).